A 476-amino-acid chain; its full sequence is Angiotensinogen (476 aa).

An N-terminal signal peptide occupies residues 1 to 24 (MAPAGVSLRATILCLVAWAGLAAG). Asparagine 38, asparagine 161, asparagine 295, and asparagine 319 each carry an N-linked (GlcNAc...) asparagine glycan. The cysteines at positions 42 and 162 are disulfide-linked.

The protein belongs to the serpin family. In response to low blood pressure, the enzyme renin/REN cleaves angiotensinogen to produce angiotensin-1. Angiotensin-1 is a substrate of ACE (angiotensin converting enzyme) that removes a dipeptide to yield the physiologically active peptide angiotensin-2. Angiotensin-1 and angiotensin-2 can be further processed to generate angiotensin-3, angiotensin-4. Angiotensin 1-9 is cleaved from angiotensin-1 by ACE2 and can be further processed by ACE to produce angiotensin 1-7, angiotensin 1-5 and angiotensin 1-4. Angiotensin 1-7 has also been proposed to be cleaved from angiotensin-2 by ACE2 or from angiotensin-1 by MME (neprilysin). In terms of processing, the disulfide bond is labile. Angiotensinogen is present in the circulation in a near 40:60 ratio with the oxidized disulfide-bonded form, which preferentially interacts with receptor-bound renin.

It localises to the secreted. Functionally, essential component of the renin-angiotensin system (RAS), a potent regulator of blood pressure, body fluid and electrolyte homeostasis. Its function is as follows. Acts directly on vascular smooth muscle as a potent vasoconstrictor, affects cardiac contractility and heart rate through its action on the sympathetic nervous system, and alters renal sodium and water absorption through its ability to stimulate the zona glomerulosa cells of the adrenal cortex to synthesize and secrete aldosterone. Acts by binding to angiotensin receptors AGTR1 and AGTR2. Also binds the DEAR/FBXW7-AS1 receptor. In terms of biological role, stimulates aldosterone release. Is a ligand for the G-protein coupled receptor MAS1. Has vasodilator and antidiuretic effects. Has an antithrombotic effect that involves MAS1-mediated release of nitric oxide from platelets. The polypeptide is Angiotensinogen (AGT) (Pan troglodytes (Chimpanzee)).